Reading from the N-terminus, the 51-residue chain is Insulin (51 aa).

Intrachain disulfides connect cysteine 7-cysteine 37, cysteine 19-cysteine 50, and cysteine 36-cysteine 41.

This sequence belongs to the insulin family. As to quaternary structure, heterodimer of a B chain and an A chain linked by two disulfide bonds.

Its subcellular location is the secreted. Functionally, insulin decreases blood glucose concentration. It increases cell permeability to monosaccharides, amino acids and fatty acids. It accelerates glycolysis, the pentose phosphate cycle, and glycogen synthesis in liver. The protein is Insulin (INS) of Elephas maximus (Indian elephant).